The following is a 156-amino-acid chain: Ribosomal RNA large subunit methyltransferase H (156 aa).

Residues Leu-73, Gly-104, and 123–128 (ISSMTL) contribute to the S-adenosyl-L-methionine site.

Belongs to the RNA methyltransferase RlmH family. As to quaternary structure, homodimer.

The protein resides in the cytoplasm. It catalyses the reaction pseudouridine(1915) in 23S rRNA + S-adenosyl-L-methionine = N(3)-methylpseudouridine(1915) in 23S rRNA + S-adenosyl-L-homocysteine + H(+). Its function is as follows. Specifically methylates the pseudouridine at position 1915 (m3Psi1915) in 23S rRNA. This Burkholderia ambifaria (strain MC40-6) protein is Ribosomal RNA large subunit methyltransferase H.